A 1408-amino-acid polypeptide reads, in one-letter code: ABC multidrug transporter MDR1 (1408 aa).

Residues methionine 1–glycine 13 show a composition bias toward low complexity. The tract at residues methionine 1–histidine 103 is disordered. A compositionally biased stretch (basic and acidic residues) spans leucine 17 to histidine 38. Helical transmembrane passes span phenylalanine 147 to glycine 167 and leucine 223 to tryptophan 243. Residues valine 157–lysine 464 form the ABC transmembrane type-1 1 domain. N-linked (GlcNAc...) asparagine glycosylation occurs at asparagine 244. A run of 4 helical transmembrane segments spans residues lysine 296–valine 316, leucine 321–threonine 341, isoleucine 408–valine 428, and glycine 436–alanine 456. The ABC transporter 1 domain maps to isoleucine 499 to asparagine 744. Glycine 534–serine 541 contacts ATP. Transmembrane regions (helical) follow at residues isoleucine 838 to phenylalanine 858 and leucine 882 to phenylalanine 902. The 288-residue stretch at isoleucine 838–lysine 1125 folds into the ABC transmembrane type-1 2 domain. N-linked (GlcNAc...) asparagine glycosylation occurs at asparagine 934. A run of 4 helical transmembrane segments spans residues glycine 952–cysteine 972, isoleucine 973–leucine 993, glycine 1072–glycine 1092, and phenylalanine 1099–phenylalanine 1119. N-linked (GlcNAc...) asparagine glycosylation is found at asparagine 1127 and asparagine 1182. Residues valine 1162–methionine 1402 form the ABC transporter 2 domain. Position 1197–1204 (glycine 1197–serine 1204) interacts with ATP. A glycan (N-linked (GlcNAc...) asparagine) is linked at asparagine 1404.

It belongs to the ABC transporter superfamily. ABCB family. Multidrug resistance exporter (TC 3.A.1.201) subfamily.

The protein resides in the cell membrane. The catalysed reaction is itraconazole(in) + ATP + H2O = itraconazole(out) + ADP + phosphate + H(+). It catalyses the reaction voriconazole(in) + ATP + H2O = voriconazole(out) + ADP + phosphate + H(+). It carries out the reaction fluconazole(in) + ATP + H2O = fluconazole(out) + ADP + phosphate + H(+). Pleiotropic ABC efflux transporter that confers resistance to structurally and functionally unrelated compounds including azoles such as fluconazole (FLC), itraconazole (ITC), posaconazole (POS), nocodazole and voriconazole (VRC). The protein is ABC multidrug transporter MDR1 of Cryptococcus deuterogattii (strain R265) (Cryptococcus gattii VGII (strain R265)).